We begin with the raw amino-acid sequence, 366 residues long: Glucose 1-dehydrogenase 2 (366 aa).

C39 contacts Zn(2+). Residue S41 participates in substrate binding. H66 and E67 together coordinate Zn(2+). Residues N90, E116, Q152, and D156 each coordinate substrate. Position 152 (Q152) interacts with Zn(2+). Residues 212–214 (NRR), 277–279 (FGF), 305–307 (LIN), and K354 contribute to the NADP(+) site. N307 is a substrate binding site.

This sequence belongs to the zinc-containing alcohol dehydrogenase family. Glucose 1-dehydrogenase subfamily. Zn(2+) serves as cofactor.

The catalysed reaction is D-glucose + NAD(+) = D-glucono-1,5-lactone + NADH + H(+). It catalyses the reaction D-glucose + NADP(+) = D-glucono-1,5-lactone + NADPH + H(+). Its function is as follows. Catalyzes the NAD(P)(+)-dependent oxidation of D-glucose to D-gluconate via gluconolactone. Can utilize both NAD(+) and NADP(+) as electron acceptor. Is involved in the degradation of glucose through a non-phosphorylative variant of the Entner-Doudoroff pathway. This chain is Glucose 1-dehydrogenase 2, found in Caldivirga maquilingensis (strain ATCC 700844 / DSM 13496 / JCM 10307 / IC-167).